A 102-amino-acid chain; its full sequence is Monothiol glutaredoxin-S6 (102 aa).

The region spanning 1–101 is the Glutaredoxin domain; the sequence is MESVRSLVED…AMLRRAGAIW (101 aa). Position 21 (cysteine 21) interacts with [2Fe-2S] cluster.

This sequence belongs to the glutaredoxin family. CC-type subfamily.

It localises to the cytoplasm. Its function is as follows. May only reduce GSH-thiol disulfides, but not protein disulfides. This chain is Monothiol glutaredoxin-S6 (GRXS6), found in Arabidopsis thaliana (Mouse-ear cress).